The sequence spans 365 residues: Peptide chain release factor 2 (365 aa).

Gln251 bears the N5-methylglutamine mark.

This sequence belongs to the prokaryotic/mitochondrial release factor family. Post-translationally, methylated by PrmC. Methylation increases the termination efficiency of RF2.

It localises to the cytoplasm. Peptide chain release factor 2 directs the termination of translation in response to the peptide chain termination codons UGA and UAA. This chain is Peptide chain release factor 2, found in Campylobacter jejuni (strain RM1221).